Consider the following 598-residue polypeptide: Transcription factor cpaR (598 aa).

Residues 22 to 51 constitute a DNA-binding region (zn(2)-C6 fungal-type); it reads CNGCRERKRRCVRRKRELPCLSCQAENRPC.

It localises to the nucleus. Transcription factor; part of the gene cluster that mediates the biosynthesis of the fungal neurotoxin cyclopiazonic acid (CPA), a nanomolar inhibitor of Ca(2+)-ATPase with a unique pentacyclic indole tetramic acid scaffold. The chain is Transcription factor cpaR from Aspergillus oryzae (Yellow koji mold).